The primary structure comprises 399 residues: Elongation factor Tu (399 aa).

Positions 10-207 (KTHMNVGTIG…AVDSYFPDPV (198 aa)) constitute a tr-type G domain. Positions 19–26 (GHIDHGKT) are G1. 19–26 (GHIDHGKT) is a binding site for GTP. Thr-26 serves as a coordination point for Mg(2+). A G2 region spans residues 60–64 (GITIN). Positions 81 to 84 (DCPG) are G3. GTP-binding positions include 81-85 (DCPGH) and 136-139 (NKVD). The segment at 136–139 (NKVD) is G4. A G5 region spans residues 174 to 176 (SAL).

This sequence belongs to the TRAFAC class translation factor GTPase superfamily. Classic translation factor GTPase family. EF-Tu/EF-1A subfamily. As to quaternary structure, monomer.

It localises to the cytoplasm. The enzyme catalyses GTP + H2O = GDP + phosphate + H(+). In terms of biological role, GTP hydrolase that promotes the GTP-dependent binding of aminoacyl-tRNA to the A-site of ribosomes during protein biosynthesis. In Petrotoga mobilis (strain DSM 10674 / SJ95), this protein is Elongation factor Tu.